The sequence spans 241 residues: Hybrid peroxiredoxin hyPrx5 (241 aa).

The Thioredoxin domain maps to 3 to 167 (SMEGKKVPQV…MLKYLAPQHQ (165 aa)). The Cysteine sulfenic acid (-SOH) intermediate; for peroxiredoxin activity role is filled by cysteine 49. The region spanning 170 to 241 (ESISIFTKPG…GSDDLEKYFA (72 aa)) is the Glutaredoxin domain. Cysteines 180 and 183 form a disulfide.

It in the N-terminal section; belongs to the peroxiredoxin family. Prx5 subfamily. The protein in the C-terminal section; belongs to the glutaredoxin family. Homotetramer; interconnecting Prx and Grx domains of different monomers.

The enzyme catalyses a hydroperoxide + 2 glutathione = an alcohol + glutathione disulfide + H2O. Functionally, thiol-specific peroxidase that catalyzes the reduction of hydrogen peroxide and organic hydroperoxides to water and alcohols, respectively. Plays a role in cell protection against oxidative stress by detoxifying peroxides. This Haemophilus influenzae (strain ATCC 51907 / DSM 11121 / KW20 / Rd) protein is Hybrid peroxiredoxin hyPrx5 (PGdx).